The following is a 223-amino-acid chain: 7-carboxy-7-deazaguanine synthase (223 aa).

Residues 12-14 (LQG) and Arg27 contribute to the substrate site. Residues 18–223 (FTGVPAIFIR…MQTHKYLNIA (206 aa)) enclose the Radical SAM core domain. The [4Fe-4S] cluster site is built by Cys31, Cys35, and Cys38. Thr40 lines the Mg(2+) pocket. Thr92 is a binding site for substrate. S-adenosyl-L-methionine contacts are provided by residues Gly94 and 136 to 138 (SPK).

The protein belongs to the radical SAM superfamily. 7-carboxy-7-deazaguanine synthase family. In terms of assembly, homodimer. [4Fe-4S] cluster is required as a cofactor. S-adenosyl-L-methionine serves as cofactor. The cofactor is Mg(2+).

It catalyses the reaction 6-carboxy-5,6,7,8-tetrahydropterin + H(+) = 7-carboxy-7-deazaguanine + NH4(+). Its pathway is purine metabolism; 7-cyano-7-deazaguanine biosynthesis. Catalyzes the complex heterocyclic radical-mediated conversion of 6-carboxy-5,6,7,8-tetrahydropterin (CPH4) to 7-carboxy-7-deazaguanine (CDG), a step common to the biosynthetic pathways of all 7-deazapurine-containing compounds. The chain is 7-carboxy-7-deazaguanine synthase from Escherichia coli (strain K12).